Here is a 239-residue protein sequence, read N- to C-terminus: tRNA (guanine-N(7)-)-methyltransferase (239 aa).

Positions 69, 94, 121, and 144 each coordinate S-adenosyl-L-methionine. Residue Asp144 is part of the active site. Lys148 lines the substrate pocket. The tract at residues 150-155 (RHNKRR) is interaction with RNA. Substrate contacts are provided by residues Asp180 and 217–220 (TKFE).

This sequence belongs to the class I-like SAM-binding methyltransferase superfamily. TrmB family. As to quaternary structure, monomer.

It catalyses the reaction guanosine(46) in tRNA + S-adenosyl-L-methionine = N(7)-methylguanosine(46) in tRNA + S-adenosyl-L-homocysteine. It functions in the pathway tRNA modification; N(7)-methylguanine-tRNA biosynthesis. Functionally, catalyzes the formation of N(7)-methylguanine at position 46 (m7G46) in tRNA. This Yersinia enterocolitica serotype O:8 / biotype 1B (strain NCTC 13174 / 8081) protein is tRNA (guanine-N(7)-)-methyltransferase.